We begin with the raw amino-acid sequence, 445 residues long: Xylose isomerase (445 aa).

Residues H107 and D110 contribute to the active site. Residues E238, E274, H277, D302, D313, D315, and D345 each coordinate Mg(2+).

The protein belongs to the xylose isomerase family. As to quaternary structure, homotetramer. Requires Mg(2+) as cofactor.

Its subcellular location is the cytoplasm. It catalyses the reaction alpha-D-xylose = alpha-D-xylulofuranose. In Priestia megaterium (strain DSM 319 / IMG 1521) (Bacillus megaterium), this protein is Xylose isomerase (xylA).